Reading from the N-terminus, the 272-residue chain is 3-methyl-2-oxobutanoate hydroxymethyltransferase (272 aa).

Residues Asp-43 and Asp-82 each coordinate Mg(2+). 3-methyl-2-oxobutanoate contacts are provided by residues 43-44 (DS), Asp-82, and Lys-112. Glu-114 contacts Mg(2+). Glu-179 serves as the catalytic Proton acceptor.

Belongs to the PanB family. Homodecamer; pentamer of dimers. Mg(2+) is required as a cofactor.

The protein resides in the cytoplasm. The catalysed reaction is 3-methyl-2-oxobutanoate + (6R)-5,10-methylene-5,6,7,8-tetrahydrofolate + H2O = 2-dehydropantoate + (6S)-5,6,7,8-tetrahydrofolate. The protein operates within cofactor biosynthesis; (R)-pantothenate biosynthesis; (R)-pantoate from 3-methyl-2-oxobutanoate: step 1/2. Functionally, catalyzes the reversible reaction in which hydroxymethyl group from 5,10-methylenetetrahydrofolate is transferred onto alpha-ketoisovalerate to form ketopantoate. This chain is 3-methyl-2-oxobutanoate hydroxymethyltransferase, found in Staphylococcus epidermidis (strain ATCC 35984 / DSM 28319 / BCRC 17069 / CCUG 31568 / BM 3577 / RP62A).